The sequence spans 389 residues: Succinate--CoA ligase [ADP-forming] subunit beta (389 aa).

The ATP-grasp domain maps to 9 to 236; the sequence is KELFAKHNVP…KDATDPLELK (228 aa). Residues Lys45, 52–54, Ser94, and Glu99 contribute to the ATP site; that span reads GRG. Mg(2+)-binding residues include Asn191 and Asp205. Substrate contacts are provided by residues Asn256 and 318–320; that span reads GIT.

It belongs to the succinate/malate CoA ligase beta subunit family. Heterotetramer of two alpha and two beta subunits. The cofactor is Mg(2+).

The enzyme catalyses succinate + ATP + CoA = succinyl-CoA + ADP + phosphate. It catalyses the reaction GTP + succinate + CoA = succinyl-CoA + GDP + phosphate. It functions in the pathway carbohydrate metabolism; tricarboxylic acid cycle; succinate from succinyl-CoA (ligase route): step 1/1. In terms of biological role, succinyl-CoA synthetase functions in the citric acid cycle (TCA), coupling the hydrolysis of succinyl-CoA to the synthesis of either ATP or GTP and thus represents the only step of substrate-level phosphorylation in the TCA. The beta subunit provides nucleotide specificity of the enzyme and binds the substrate succinate, while the binding sites for coenzyme A and phosphate are found in the alpha subunit. The protein is Succinate--CoA ligase [ADP-forming] subunit beta of Mycobacteroides abscessus (strain ATCC 19977 / DSM 44196 / CCUG 20993 / CIP 104536 / JCM 13569 / NCTC 13031 / TMC 1543 / L948) (Mycobacterium abscessus).